A 223-amino-acid polypeptide reads, in one-letter code: UPF0758 protein Tgr7_0100 (223 aa).

In terms of domain architecture, MPN spans 102–223 (ALTSPDDTRR…LVSFAERGLL (122 aa)). The Zn(2+) site is built by H173, H175, and D186. The JAMM motif motif lies at 173-186 (HNHPSGVAEPSRSD).

The protein belongs to the UPF0758 family.

This chain is UPF0758 protein Tgr7_0100, found in Thioalkalivibrio sulfidiphilus (strain HL-EbGR7).